Reading from the N-terminus, the 85-residue chain is U4-theraphotoxin-Hhn1i (85 aa).

The signal sequence occupies residues 1 to 22; it reads MKVTLIAILTCAAVLVLHTTAA. Positions 23-48 are excised as a propeptide; sequence EELEAESQLMEVGMPDTELAAVDEER. Cystine bridges form between Cys-52/Cys-66, Cys-56/Cys-77, and Cys-71/Cys-82.

The protein belongs to the neurotoxin 12 (Hwtx-2) family. 02 (Hwtx-2) subfamily. In terms of tissue distribution, expressed by the venom gland.

The protein resides in the secreted. Postsynaptic neurotoxin. This Cyriopagopus hainanus (Chinese bird spider) protein is U4-theraphotoxin-Hhn1i.